A 193-amino-acid chain; its full sequence is Fe/S biogenesis protein NfuA (193 aa).

Cys151 and Cys154 together coordinate [4Fe-4S] cluster.

It belongs to the NfuA family. As to quaternary structure, homodimer. [4Fe-4S] cluster is required as a cofactor.

Involved in iron-sulfur cluster biogenesis. Binds a 4Fe-4S cluster, can transfer this cluster to apoproteins, and thereby intervenes in the maturation of Fe/S proteins. Could also act as a scaffold/chaperone for damaged Fe/S proteins. The sequence is that of Fe/S biogenesis protein NfuA from Buchnera aphidicola subsp. Cinara cedri (strain Cc).